We begin with the raw amino-acid sequence, 137 residues long: uncharacterized protein (137 aa).

This is an uncharacterized protein from Homo sapiens (Human).